The primary structure comprises 84 residues: Toxin CsE9 (84 aa).

Positions 1-19 (MNSLLMITTCLILIGTVLA) are cleaved as a signal peptide. The LCN-type CS-alpha/beta domain maps to 20–83 (EDGYLFDKRK…ISRTPGKTCK (64 aa)). 4 cysteine pairs are disulfide-bonded: Cys31–Cys82, Cys35–Cys58, Cys44–Cys63, and Cys48–Cys65.

It belongs to the long (4 C-C) scorpion toxin superfamily. Sodium channel inhibitor family. Beta subfamily. In terms of tissue distribution, expressed by the venom gland.

The protein resides in the secreted. Its function is as follows. Beta toxins bind voltage-independently at site-4 of sodium channels (Nav) and shift the voltage of activation toward more negative potentials thereby affecting sodium channel activation and promoting spontaneous and repetitive firing. In Centruroides sculpturatus (Arizona bark scorpion), this protein is Toxin CsE9.